We begin with the raw amino-acid sequence, 432 residues long: Adenylosuccinate synthetase (432 aa).

Residues 13–19 and 41–43 contribute to the GTP site; these read GDEGKGK and GHT. The active-site Proton acceptor is the Asp14. The Mg(2+) site is built by Asp14 and Gly41. IMP contacts are provided by residues 14 to 17, 39 to 42, Thr130, Arg144, Gln225, Thr240, and Arg304; these read DEGK and NAGH. Catalysis depends on His42, which acts as the Proton donor. Substrate is bound at residue 300–306; the sequence is ATTGRSR. Residues Arg306, 332–334, and 415–417 contribute to the GTP site; these read KLD and STG.

It belongs to the adenylosuccinate synthetase family. In terms of assembly, homodimer. The cofactor is Mg(2+).

The protein resides in the cytoplasm. It catalyses the reaction IMP + L-aspartate + GTP = N(6)-(1,2-dicarboxyethyl)-AMP + GDP + phosphate + 2 H(+). It participates in purine metabolism; AMP biosynthesis via de novo pathway; AMP from IMP: step 1/2. Functionally, plays an important role in the de novo pathway of purine nucleotide biosynthesis. Catalyzes the first committed step in the biosynthesis of AMP from IMP. This Marinomonas sp. (strain MWYL1) protein is Adenylosuccinate synthetase.